Consider the following 517-residue polypeptide: MRAIAIVLARSSSKRIKNKNIIDFFNKPMLAYPIEVALNSKLFEKVFISSDSMEYVNLAKNYGASFLNLRPKILADDRATTLEVMAYHMEELELKDEDIACCLYGASALLQEKHLKNAFETLNKNQNTDYVFTCSPFSASPYRSFSLENGVQMAFKEHSNTRTQDLKTLYHDAGLLYMGKAQAFKEMRPIFSQNSIALELSPLEVQDIAHFRRFRISQAQIQPFEKRMPVKILCDCFLTSGLGHVRRCEKILSFIEKLGVEASLYLHKQNNISAFLEGVGGNDFLITDSYCLNSKDFYLLKEKAKSLMVIEDTEHAKGFYPKNTKILNFTLNALKHYHHLSKDYQYYLGVGFYPVDARFIYDRPINTENKEVLITLGGSEQKTLKEIVKILENKNVNLHIISPYTPKNPPKNTHYYSPLNPLEFSSLMKSCACAISAAGQTLYELALSQTPSLILPIASNQIIQSKEFESLGIFKQTSLKTLAKDFENLQIQKNQAWAKNLVFGDKLEGALREFLEI.

The segment at 1–208 is pseudaminic acid cytidylyltransferase; the sequence is MRAIAIVLAR…ELSPLEVQDI (208 aa). Positions 209–517 are UDP-2,4-diacetamido-2,4,6-trideoxy-beta-L-altropyranose hydrolase; it reads AHFRRFRISQ…EGALREFLEI (309 aa). The active-site Proton acceptor; for UDP-2,4-diacetamido-2,4,6-trideoxy-beta-L-altropyranose hydrolase activity is the His-244.

This sequence in the N-terminal section; belongs to the CMP-NeuNAc synthase family. The protein in the C-terminal section; belongs to the PseG family. In terms of assembly, monomer. Mg(2+) is required as a cofactor.

The enzyme catalyses UDP-2,4-diacetamido-2,4,6-trideoxy-beta-L-altrose + H2O = 2,4-diacetamido-2,4,6-trideoxy-beta-L-altrose + UDP + H(+). The catalysed reaction is pseudaminate + CTP = CMP-pseudaminate + diphosphate. Its function is as follows. Catalyzes the fourth and sixth steps in the biosynthesis of pseudaminic acid, a sialic-acid-like sugar that is used to modify flagellin. The C-terminus mediates the fourth step of the pathway and catalyzes the removal of UDP from C-1 of UDP-2,4-diacetamido-2,4,6-trideoxy-beta-L-altropyranose forming 2,4-diacetamido-2,4,6-trideoxy-beta-L-altropyranose. The N-terminal part mediates the last step of the pathway by mediating activation of pseudaminic acid with CMP by forming CMP-pseudaminic acid. The polypeptide is Pseudaminic acid cytidylyltransferase and UDP-2,4-diacetamido-2,4,6-trideoxy-beta-L-altropyranose hydrolase (Helicobacter pylori (strain ATCC 700392 / 26695) (Campylobacter pylori)).